The primary structure comprises 298 residues: N-acetylmuramic acid 6-phosphate etherase (298 aa).

Residues 55 to 218 (ITESLRRGGR…STASMVRLGK (164 aa)) enclose the SIS domain. Glu-83 serves as the catalytic Proton donor. The active site involves Glu-114.

It belongs to the GCKR-like family. MurNAc-6-P etherase subfamily. Homodimer.

It carries out the reaction N-acetyl-D-muramate 6-phosphate + H2O = N-acetyl-D-glucosamine 6-phosphate + (R)-lactate. It functions in the pathway amino-sugar metabolism; N-acetylmuramate degradation. In terms of biological role, specifically catalyzes the cleavage of the D-lactyl ether substituent of MurNAc 6-phosphate, producing GlcNAc 6-phosphate and D-lactate. This Mycolicibacterium smegmatis (strain ATCC 700084 / mc(2)155) (Mycobacterium smegmatis) protein is N-acetylmuramic acid 6-phosphate etherase.